Here is a 476-residue protein sequence, read N- to C-terminus: Aspartyl/glutamyl-tRNA(Asn/Gln) amidotransferase subunit B (476 aa).

It belongs to the GatB/GatE family. GatB subfamily. In terms of assembly, heterotrimer of A, B and C subunits.

It carries out the reaction L-glutamyl-tRNA(Gln) + L-glutamine + ATP + H2O = L-glutaminyl-tRNA(Gln) + L-glutamate + ADP + phosphate + H(+). The catalysed reaction is L-aspartyl-tRNA(Asn) + L-glutamine + ATP + H2O = L-asparaginyl-tRNA(Asn) + L-glutamate + ADP + phosphate + 2 H(+). Its function is as follows. Allows the formation of correctly charged Asn-tRNA(Asn) or Gln-tRNA(Gln) through the transamidation of misacylated Asp-tRNA(Asn) or Glu-tRNA(Gln) in organisms which lack either or both of asparaginyl-tRNA or glutaminyl-tRNA synthetases. The reaction takes place in the presence of glutamine and ATP through an activated phospho-Asp-tRNA(Asn) or phospho-Glu-tRNA(Gln). This chain is Aspartyl/glutamyl-tRNA(Asn/Gln) amidotransferase subunit B, found in Oleidesulfovibrio alaskensis (strain ATCC BAA-1058 / DSM 17464 / G20) (Desulfovibrio alaskensis).